Here is a 157-residue protein sequence, read N- to C-terminus: Protein Smg homolog (157 aa).

It belongs to the Smg family.

In Aeromonas salmonicida (strain A449), this protein is Protein Smg homolog.